We begin with the raw amino-acid sequence, 218 residues long: Phosphoglycolate phosphatase (218 aa).

The active-site Nucleophile is Asp7. Residues Asp7, Asp9, and Asp167 each contribute to the Mg(2+) site.

Belongs to the HAD-like hydrolase superfamily. CbbY/CbbZ/Gph/YieH family. Mg(2+) serves as cofactor.

The catalysed reaction is 2-phosphoglycolate + H2O = glycolate + phosphate. Its pathway is organic acid metabolism; glycolate biosynthesis; glycolate from 2-phosphoglycolate: step 1/1. Functionally, specifically catalyzes the dephosphorylation of 2-phosphoglycolate. Is involved in the dissimilation of the intracellular 2-phosphoglycolate formed during the DNA repair of 3'-phosphoglycolate ends, a major class of DNA lesions induced by oxidative stress. In Cereibacter sphaeroides (strain ATCC 17025 / ATH 2.4.3) (Rhodobacter sphaeroides), this protein is Phosphoglycolate phosphatase.